A 457-amino-acid polypeptide reads, in one-letter code: Histidine--tRNA ligase (457 aa).

It belongs to the class-II aminoacyl-tRNA synthetase family. Homodimer.

It is found in the cytoplasm. The catalysed reaction is tRNA(His) + L-histidine + ATP = L-histidyl-tRNA(His) + AMP + diphosphate + H(+). The protein is Histidine--tRNA ligase of Mesoplasma florum (strain ATCC 33453 / NBRC 100688 / NCTC 11704 / L1) (Acholeplasma florum).